Reading from the N-terminus, the 298-residue chain is tRNA pseudouridine synthase-like 1 (298 aa).

Residue aspartate 60 is the Nucleophile of the active site. Tyrosine 124 provides a ligand contact to substrate.

It belongs to the tRNA pseudouridine synthase TruA family.

The enzyme catalyses a uridine in tRNA = a pseudouridine in tRNA. The sequence is that of tRNA pseudouridine synthase-like 1 (pusl1) from Xenopus laevis (African clawed frog).